Consider the following 95-residue polypeptide: uncharacterized protein (95 aa).

3 consecutive transmembrane segments (helical) span residues 3–23, 35–55, and 63–83; these read YTVL…GFSF, ILFL…MMLT, and MLGV…VMII.

It is found in the cell membrane. This is an uncharacterized protein from Mycoplasma pneumoniae (strain ATCC 29342 / M129 / Subtype 1) (Mycoplasmoides pneumoniae).